Here is a 316-residue protein sequence, read N- to C-terminus: Peroxisomal targeting signal 2 receptor (316 aa).

6 WD repeats span residues 56–96 (DTRD…GGRP), 102–142 (EHTK…SLKT), 145–185 (EHRY…SLNT), 188–228 (AHDH…RPTT), 232–272 (GHTY…DPII), and 277–316 (HHTE…GQFR).

It belongs to the WD repeat peroxin-7 family. In terms of assembly, interacts with PEX5; interaction only takes place when PEX7 is associated with cargo proteins.

Its subcellular location is the cytoplasm. It localises to the cytosol. The protein localises to the peroxisome matrix. Receptor required for the peroxisomal import of proteins containing a C-terminal PTS2-type peroxisomal targeting signal. Specifically binds to cargo proteins containing a PTS2 peroxisomal targeting signal in the cytosol. Cargo protein-binding triggers interaction with PEX5 and formation of a ternary complex composed of PEX5 and PEX7 along with PTS2-containing cargo proteins, which is tranlocated into peroxisomes by passing through the PEX13-PEX14 docking complex. The chain is Peroxisomal targeting signal 2 receptor (pex7) from Dictyostelium discoideum (Social amoeba).